Here is a 108-residue protein sequence, read N- to C-terminus: Nucleoid-associated protein BamMC406_1737 (108 aa).

Positions 85–95 (ATSQEKMSGMT) are enriched in polar residues. Positions 85 to 108 (ATSQEKMSGMTSGLPLPPGFKLPF) are disordered. The span at 99–108 (PLPPGFKLPF) shows a compositional bias: pro residues.

The protein belongs to the YbaB/EbfC family. As to quaternary structure, homodimer.

The protein localises to the cytoplasm. It is found in the nucleoid. Functionally, binds to DNA and alters its conformation. May be involved in regulation of gene expression, nucleoid organization and DNA protection. This Burkholderia ambifaria (strain MC40-6) protein is Nucleoid-associated protein BamMC406_1737.